Consider the following 353-residue polypeptide: Guanine nucleotide-binding protein subunit alpha (353 aa).

Gly2 carries N-myristoyl glycine lipidation. A lipid anchor (S-palmitoyl cysteine) is attached at Cys3. One can recognise a G-alpha domain in the interval Asn33–Leu353. The tract at residues Lys36–Thr49 is G1 motif. Residues Glu44, Ser45, Gly46, Lys47, Ser48, Thr49, Asp150, Leu175, Thr181, Gly203, Asn269, Lys270, Asp272, and Ala325 each coordinate GTP. Residue Ser48 coordinates Mg(2+). Residues Asp173 to Thr181 are G2 motif. Mg(2+) is bound at residue Thr181. Residues Tyr196–Arg205 are G3 motif. The G4 motif stretch occupies residues Ile265 to Asp272. Residues Thr323–Thr328 are G5 motif.

Belongs to the G-alpha family. G(q) subfamily. As to quaternary structure, g proteins are composed of 3 units; alpha, beta and gamma. The alpha chain contains the guanine nucleotide binding site. Mg(2+) is required as a cofactor.

Functionally, guanine nucleotide-binding proteins (G proteins) are involved as modulators or transducers in various transmembrane signaling systems. This chain is Guanine nucleotide-binding protein subunit alpha (CGP1), found in Coprinellus congregatus (Inky cap fungus).